Reading from the N-terminus, the 498-residue chain is Calcium-dependent protein kinase 22 (498 aa).

Gly-2 is lipidated: N-myristoyl glycine. A Protein kinase domain is found at Tyr-36–Met-305. Residues Leu-42 to Thr-50 and Lys-65 contribute to the ATP site. Asp-164 functions as the Proton acceptor in the catalytic mechanism. Phosphoserine is present on Ser-204. The interval Ala-309–Ile-339 is autoinhibitory domain. EF-hand domains are found at residues Glu-346–Lys-381, Leu-382–Leu-417, Glu-418–Gly-453, and Asp-454–Gln-488. 20 residues coordinate Ca(2+): Asp-359, Asp-361, Ser-363, Ser-365, Glu-370, Asp-395, Asp-397, Asn-399, Thr-401, Glu-406, Asp-431, Asp-433, Ser-435, His-437, Glu-442, Asp-466, Asn-468, Asp-470, Lys-472, and Glu-477.

It belongs to the protein kinase superfamily. Ser/Thr protein kinase family. CDPK subfamily.

It localises to the membrane. The enzyme catalyses L-seryl-[protein] + ATP = O-phospho-L-seryl-[protein] + ADP + H(+). The catalysed reaction is L-threonyl-[protein] + ATP = O-phospho-L-threonyl-[protein] + ADP + H(+). Its activity is regulated as follows. Activated by calcium. Autophosphorylation may play an important role in the regulation of the kinase activity. In terms of biological role, may play a role in signal transduction pathways that involve calcium as a second messenger. In Arabidopsis thaliana (Mouse-ear cress), this protein is Calcium-dependent protein kinase 22 (CPK22).